A 211-amino-acid chain; its full sequence is ATP-dependent Clp protease proteolytic subunit 2 (211 aa).

Residue Ser106 is the Nucleophile of the active site. His131 is a catalytic residue.

It belongs to the peptidase S14 family. As to quaternary structure, fourteen ClpP subunits assemble into 2 heptameric rings which stack back to back to give a disk-like structure with a central cavity, resembling the structure of eukaryotic proteasomes.

It localises to the cytoplasm. The catalysed reaction is Hydrolysis of proteins to small peptides in the presence of ATP and magnesium. alpha-casein is the usual test substrate. In the absence of ATP, only oligopeptides shorter than five residues are hydrolyzed (such as succinyl-Leu-Tyr-|-NHMec, and Leu-Tyr-Leu-|-Tyr-Trp, in which cleavage of the -Tyr-|-Leu- and -Tyr-|-Trp bonds also occurs).. Cleaves peptides in various proteins in a process that requires ATP hydrolysis. Has a chymotrypsin-like activity. Plays a major role in the degradation of misfolded proteins. The sequence is that of ATP-dependent Clp protease proteolytic subunit 2 from Bradyrhizobium diazoefficiens (strain JCM 10833 / BCRC 13528 / IAM 13628 / NBRC 14792 / USDA 110).